A 132-amino-acid chain; its full sequence is Glycine cleavage system H protein (132 aa).

One can recognise a Lipoyl-binding domain in the interval 27 to 109 (FATIGISAFA…FDFGWILKVK (83 aa)). The residue at position 68 (lysine 68) is an N6-lipoyllysine.

The protein belongs to the GcvH family. As to quaternary structure, the glycine cleavage system is composed of four proteins: P, T, L and H. (R)-lipoate is required as a cofactor.

The glycine cleavage system catalyzes the degradation of glycine. The H protein shuttles the methylamine group of glycine from the P protein to the T protein. The polypeptide is Glycine cleavage system H protein (Rhodopirellula baltica (strain DSM 10527 / NCIMB 13988 / SH1)).